A 252-amino-acid polypeptide reads, in one-letter code: MYRTISRSSSGLIRQSTARLTRQLSTTRTTPSQYNSKLLLGVLGTGALAFGYFSQQSSLIQNASTAENIEKVFEEGNAVAKDAQESLDARQEKVIKENEQKTKKAEDAKTSSESKANVADKKSNSQPEGEPEGEGKQEAAFNPDTGEINWDCPCLGGMAHGPCGEEFKEAFSCFVFSETEPKGIDCIKKFENMRSCFKRYPEHYKDELYDDGEEEASTEVVEHVVLETSEPAIEQIEQGIKEDKVKPNTKSD.

The N-terminal 31 residues, 1–31, are a transit peptide targeting the mitochondrion; sequence MYRTISRSSSGLIRQSTARLTRQLSTTRTTP. The Mitochondrial matrix segment spans residues 32 to 37; it reads SQYNSK. Residues 38-54 form a helical; Signal-anchor for type II membrane protein membrane-spanning segment; the sequence is LLLGVLGTGALAFGYFS. The Mitochondrial intermembrane segment spans residues 55 to 252; that stretch reads QQSSLIQNAS…DKVKPNTKSD (198 aa). A compositionally biased stretch (basic and acidic residues) spans 90-123; it reads RQEKVIKENEQKTKKAEDAKTSSESKANVADKKS. Residues 90–143 form a disordered region; it reads RQEKVIKENEQKTKKAEDAKTSSESKANVADKKSNSQPEGEPEGEGKQEAAFNP. Cystine bridges form between C152–C154, C163–C196, and C173–C186. The region spanning 160–204 is the CHCH domain; the sequence is HGPCGEEFKEAFSCFVFSETEPKGIDCIKKFENMRSCFKRYPEHY. 2 short sequence motifs (cx9C motif) span residues 163–173 and 186–196; these read CGEEFKEAFSC and CIKKFENMRSC. Positions 230–252 are disordered; sequence EPAIEQIEQGIKEDKVKPNTKSD. Positions 239–252 are enriched in basic and acidic residues; the sequence is GIKEDKVKPNTKSD.

As to quaternary structure, monomer. Cu(2+) is required as a cofactor. Requires Zn(2+) as cofactor.

It localises to the mitochondrion inner membrane. In terms of biological role, required for the import and folding of small cysteine-containing proteins (small Tim) in the mitochondrial intermembrane space (IMS). Forms a redox cycle with ERV1 that involves a disulfide relay system. Precursor proteins to be imported into the IMS are translocated in their reduced form into the mitochondria. The oxidized form of MIA40 forms a transient intermolecular disulfide bridge with the reduced precursor protein, resulting in oxidation of the precursor protein that now contains an intramolecular disulfide bond and is able to undergo folding in the IMS. The protein is Mitochondrial intermembrane space import and assembly protein 40 (MIA40) of Candida albicans (strain SC5314 / ATCC MYA-2876) (Yeast).